The primary structure comprises 227 residues: UPF0758 protein lpl2409 (227 aa).

Residues 102 to 225 (RLSNTQQTYA…YSIFAENKWA (124 aa)) enclose the MPN domain. Positions 173, 175, and 186 each coordinate Zn(2+). The JAMM motif signature appears at 173–186 (HNHPSGLSDASQQD).

Belongs to the UPF0758 family.

The chain is UPF0758 protein lpl2409 from Legionella pneumophila (strain Lens).